The chain runs to 55 residues: uncharacterized protein (55 aa).

The signal sequence occupies residues 1–25 (MKFVKAIWPFVAVAIVFMFMSAFKF).

This is an uncharacterized protein from Bacillus subtilis (strain 168).